The sequence spans 316 residues: Peroxidase 67 (316 aa).

Positions 1–19 (MLKVVLLMMIMMLASQSEA) are cleaved as a signal peptide. Glutamine 20 is subject to Pyrrolidone carboxylic acid. 4 disulfide bridges follow: cysteine 30/cysteine 110, cysteine 63/cysteine 68, cysteine 116/cysteine 312, and cysteine 196/cysteine 221. Residue histidine 61 is the Proton acceptor of the active site. Positions 62, 65, 67, 69, and 71 each coordinate Ca(2+). Proline 159 is a binding site for substrate. Histidine 189 contributes to the heme b binding site. Threonine 190 serves as a coordination point for Ca(2+). Residue asparagine 205 is glycosylated (N-linked (GlcNAc...) asparagine). Residues aspartate 236, serine 239, and aspartate 244 each contribute to the Ca(2+) site.

This sequence belongs to the peroxidase family. Classical plant (class III) peroxidase subfamily. Requires heme b as cofactor. It depends on Ca(2+) as a cofactor.

It localises to the secreted. It catalyses the reaction 2 a phenolic donor + H2O2 = 2 a phenolic radical donor + 2 H2O. In terms of biological role, removal of H(2)O(2), oxidation of toxic reductants, biosynthesis and degradation of lignin, suberization, auxin catabolism, response to environmental stresses such as wounding, pathogen attack and oxidative stress. These functions might be dependent on each isozyme/isoform in each plant tissue. The polypeptide is Peroxidase 67 (PER67) (Arabidopsis thaliana (Mouse-ear cress)).